The primary structure comprises 298 residues: GTPase Era (298 aa).

Positions 8 to 176 constitute an Era-type G domain; that stretch reads HCGSVAVIGR…VRDVLKLLPE (169 aa). Positions 16-23 are G1; that stretch reads GRPNVGKS. A GTP-binding site is contributed by 16–23; that stretch reads GRPNVGKS. The tract at residues 42–46 is G2; sequence QTTRH. Residues 63 to 66 form a G3 region; sequence DTPG. GTP-binding positions include 63–67 and 125–128; these read DTPGL and NKID. The segment at 125–128 is G4; it reads NKID. Positions 155–157 are G5; sequence ISA. One can recognise a KH type-2 domain in the interval 199 to 283; it reads VREQLMRQLG…FLETWVRVRE (85 aa).

Belongs to the TRAFAC class TrmE-Era-EngA-EngB-Septin-like GTPase superfamily. Era GTPase family. Monomer.

The protein localises to the cytoplasm. The protein resides in the cell inner membrane. In terms of biological role, an essential GTPase that binds both GDP and GTP, with rapid nucleotide exchange. Plays a role in 16S rRNA processing and 30S ribosomal subunit biogenesis and possibly also in cell cycle regulation and energy metabolism. This Stenotrophomonas maltophilia (strain K279a) protein is GTPase Era.